A 342-amino-acid polypeptide reads, in one-letter code: Tetraacyldisaccharide 4'-kinase (342 aa).

68 to 75 (TVGGTGKT) is an ATP binding site.

Belongs to the LpxK family.

The catalysed reaction is a lipid A disaccharide + ATP = a lipid IVA + ADP + H(+). The protein operates within glycolipid biosynthesis; lipid IV(A) biosynthesis; lipid IV(A) from (3R)-3-hydroxytetradecanoyl-[acyl-carrier-protein] and UDP-N-acetyl-alpha-D-glucosamine: step 6/6. Its function is as follows. Transfers the gamma-phosphate of ATP to the 4'-position of a tetraacyldisaccharide 1-phosphate intermediate (termed DS-1-P) to form tetraacyldisaccharide 1,4'-bis-phosphate (lipid IVA). The protein is Tetraacyldisaccharide 4'-kinase of Burkholderia thailandensis (strain ATCC 700388 / DSM 13276 / CCUG 48851 / CIP 106301 / E264).